The sequence spans 79 residues: Large ribosomal subunit protein uL22 (79 aa).

This sequence belongs to the universal ribosomal protein uL22 family. As to quaternary structure, part of the 50S ribosomal subunit.

This protein binds specifically to 23S rRNA; its binding is stimulated by other ribosomal proteins, e.g. L4, L17, and L20. It is important during the early stages of 50S assembly. It makes multiple contacts with different domains of the 23S rRNA in the assembled 50S subunit and ribosome. Its function is as follows. The globular domain of the protein is located near the polypeptide exit tunnel on the outside of the subunit, while an extended beta-hairpin is found that lines the wall of the exit tunnel in the center of the 70S ribosome. The protein is Large ribosomal subunit protein uL22 (rplV) of Clover proliferation phytoplasma.